A 204-amino-acid chain; its full sequence is Large ribosomal subunit protein bL25 (204 aa).

Residues 1-23 (MSETLHLSAETRDRAGKGASRAL) form a disordered region.

This sequence belongs to the bacterial ribosomal protein bL25 family. CTC subfamily. As to quaternary structure, part of the 50S ribosomal subunit; part of the 5S rRNA/L5/L18/L25 subcomplex. Contacts the 5S rRNA. Binds to the 5S rRNA independently of L5 and L18.

This is one of the proteins that binds to the 5S RNA in the ribosome where it forms part of the central protuberance. The sequence is that of Large ribosomal subunit protein bL25 from Novosphingobium aromaticivorans (strain ATCC 700278 / DSM 12444 / CCUG 56034 / CIP 105152 / NBRC 16084 / F199).